A 1121-amino-acid polypeptide reads, in one-letter code: tRNA (34-2'-O)-methyltransferase regulator WDR6 (1121 aa).

The residue at position 1 (Met1) is an N-acetylmethionine. WD repeat units follow at residues 53–97, 105–143, 147–189, 200–238, 247–285, 289–327, 335–376, 381–422, 425–470, 476–520, 559–598, 604–642, 645–684, 739–785, 848–893, 901–946, 970–1012, 1036–1073, and 1079–1121; these read IKRV…VVKI, WELWRSGLWNMSDWIWDARWLEGNIALALGHNSVVLYDP, CILQ…VWYP, APDRRISGHVGIIFSMSYLESKGLLATASEDRSVRIWKV, RVQNIGHCFGHSARVWQVKLLENYLISAGEDCVCLVWSH, ILQAFRGHQGRGIRAIAAHERQAWVITGGDDSGIRLWHL, LGVS…LYDV, WEQL…VVPI, PTAA…ISAA, IFVK…LFPS, PVSTLPSLHGKQGVTSVTCHGGYVYTTGRDGAYYQLFVRD, VLRQKSCRGMNWLAGLRIVPDGSMVILGFHANEFVVWNP, HEKLHIVNCGGGHRSWAFSDTEAAMAFAYLKDGDVMLYRA, LTDI…VWGI, RNRH…LFLL, QLLA…FWDL, GTPS…VFVL, EEYSVPCAHAAHVTGLKILSPSIMVSASIDQRLTFWRL, and TFMN…NWYD.

It belongs to the WD repeat WDR6 family. In terms of assembly, interacts with FTSJ1; the interaction is direct, and required for 2'-O-methylation of position 34 in substrate tRNAs. Interacts with IRS4. Interacts with STK11/LKB1. Ubiquitous.

It localises to the cytoplasm. Its function is as follows. Together with methyltransferase FTSJ1, methylates the 2'-O-ribose of nucleotides at position 34 of the tRNA anticodon loop of substrate tRNAs. Required for the correct positioning of the substrate tRNA for methylation. Required to suppress amino acid starvation-induced autophagy. Enhances the STK11/LKB1-induced cell growth suppression activity. This is tRNA (34-2'-O)-methyltransferase regulator WDR6 (WDR6) from Homo sapiens (Human).